Consider the following 508-residue polypeptide: Cobyric acid synthase (508 aa).

The region spanning 266 to 464 (SLRIAVVAYP…AHGLFESTEV (199 aa)) is the GATase cobBQ-type domain. The Nucleophile role is filled by cysteine 347. The active site involves histidine 456.

It belongs to the CobB/CobQ family. CobQ subfamily.

The protein operates within cofactor biosynthesis; adenosylcobalamin biosynthesis. Functionally, catalyzes amidations at positions B, D, E, and G on adenosylcobyrinic A,C-diamide. NH(2) groups are provided by glutamine, and one molecule of ATP is hydrogenolyzed for each amidation. This chain is Cobyric acid synthase, found in Methylibium petroleiphilum (strain ATCC BAA-1232 / LMG 22953 / PM1).